The following is a 335-amino-acid chain: Methylthioribose-1-phosphate isomerase (335 aa).

Substrate contacts are provided by residues 47 to 49, Arg-81, and Gln-184; that span reads RGA. The active-site Proton donor is the Asp-225. Residue 235–236 participates in substrate binding; sequence NK.

It belongs to the eIF-2B alpha/beta/delta subunits family. MtnA subfamily.

The catalysed reaction is 5-(methylsulfanyl)-alpha-D-ribose 1-phosphate = 5-(methylsulfanyl)-D-ribulose 1-phosphate. Its pathway is amino-acid biosynthesis; L-methionine biosynthesis via salvage pathway; L-methionine from S-methyl-5-thio-alpha-D-ribose 1-phosphate: step 1/6. Catalyzes the interconversion of methylthioribose-1-phosphate (MTR-1-P) into methylthioribulose-1-phosphate (MTRu-1-P). This Synechococcus sp. (strain CC9902) protein is Methylthioribose-1-phosphate isomerase.